The following is a 194-amino-acid chain: MREGLVTRNTKETQINVKISLDGKGDCQANTGIGFFDHMLVLFTKHGLMDAYFDVKGDLHVDSHHTIEDTGIAMGLAIRQALGDKKSIRRYGTAYVPMDEALVLVSLDLSDRPYLVFDAQFSQPMVGQMDTQMVEEFFRAVAFNAGITLHIKVLHGSNCHHIIEAMFKAFGRAIDDATRLDTRIEGVLSTKGTL.

It belongs to the imidazoleglycerol-phosphate dehydratase family.

It localises to the cytoplasm. The enzyme catalyses D-erythro-1-(imidazol-4-yl)glycerol 3-phosphate = 3-(imidazol-4-yl)-2-oxopropyl phosphate + H2O. It participates in amino-acid biosynthesis; L-histidine biosynthesis; L-histidine from 5-phospho-alpha-D-ribose 1-diphosphate: step 6/9. The sequence is that of Imidazoleglycerol-phosphate dehydratase from Ruminiclostridium cellulolyticum (strain ATCC 35319 / DSM 5812 / JCM 6584 / H10) (Clostridium cellulolyticum).